The chain runs to 250 residues: Putative HTH-type transcriptional regulatory protein PAE1627 (250 aa).

The HTH cro/C1-type domain maps to 129–183 (LRAKRQQAGLSLGTLATNLGVTRETVYRYERGEIEAPLKIAEKLINMFGEDITKK). Residues 140–159 (LGTLATNLGVTRETVYRYER) constitute a DNA-binding region (H-T-H motif).

The sequence is that of Putative HTH-type transcriptional regulatory protein PAE1627 from Pyrobaculum aerophilum (strain ATCC 51768 / DSM 7523 / JCM 9630 / CIP 104966 / NBRC 100827 / IM2).